Here is a 287-residue protein sequence, read N- to C-terminus: Protease HtpX (287 aa).

A run of 2 helical transmembrane segments spans residues 4–24 (VFLLIATNLAILLVASIVMSI) and 33–53 (GGLLVFAAIFGFGGSFISLAI). Position 139 (His-139) interacts with Zn(2+). Glu-140 is an active-site residue. His-143 contacts Zn(2+). Transmembrane regions (helical) follow at residues 154–174 (LIQGVVNTFVIFAARVVAGII) and 195–215 (GVVFVLDMLFGILASIIVAYF). Zn(2+) is bound at residue Glu-220.

It belongs to the peptidase M48B family. It depends on Zn(2+) as a cofactor.

It localises to the cell inner membrane. In Shewanella denitrificans (strain OS217 / ATCC BAA-1090 / DSM 15013), this protein is Protease HtpX.